We begin with the raw amino-acid sequence, 166 residues long: Outer membrane protein assembly factor BamE (166 aa).

An N-terminal signal peptide occupies residues 1–18; it reads MKRTVFPLAVAAALTLTA. Cys19 carries N-palmitoyl cysteine lipidation. Cys19 is lipidated: S-diacylglycerol cysteine. Residues 143 to 166 form a disordered region; it reads LFSNDDSGEMPVKPESKPSDLLNE.

The protein belongs to the BamE family. Part of the Bam complex.

It localises to the cell outer membrane. In terms of biological role, part of the outer membrane protein assembly complex, which is involved in assembly and insertion of beta-barrel proteins into the outer membrane. This chain is Outer membrane protein assembly factor BamE, found in Methylomonas methanica (strain DSM 25384 / MC09).